Here is a 40-residue protein sequence, read N- to C-terminus: Antimicrobial peptide 2 (40 aa).

The region spanning 1-40 (AQCGAQGGGATCPGGLCCSQWGWCGSTPKYCGAGCQSNCR) is the Chitin-binding type-1 domain. Cystine bridges form between Cys3–Cys18, Cys12–Cys24, Cys17–Cys31, and Cys35–Cys39.

In terms of processing, not glycosylated.

Functionally, antimicrobial peptide active against plant pathogenic fungi and Gram-negative and -positive bacteria. In Fagopyrum esculentum (Common buckwheat), this protein is Antimicrobial peptide 2.